Consider the following 95-residue polypeptide: Glutamyl-tRNA(Gln) amidotransferase subunit C (95 aa).

The protein belongs to the GatC family. In terms of assembly, heterotrimer of A, B and C subunits.

It catalyses the reaction L-glutamyl-tRNA(Gln) + L-glutamine + ATP + H2O = L-glutaminyl-tRNA(Gln) + L-glutamate + ADP + phosphate + H(+). It carries out the reaction L-aspartyl-tRNA(Asn) + L-glutamine + ATP + H2O = L-asparaginyl-tRNA(Asn) + L-glutamate + ADP + phosphate + 2 H(+). Its function is as follows. Allows the formation of correctly charged Asn-tRNA(Asn) or Gln-tRNA(Gln) through the transamidation of misacylated Asp-tRNA(Asn) or Glu-tRNA(Gln) in organisms which lack either or both of asparaginyl-tRNA or glutaminyl-tRNA synthetases. The reaction takes place in the presence of glutamine and ATP through an activated phospho-Asp-tRNA(Asn) or phospho-Glu-tRNA(Gln). The polypeptide is Glutamyl-tRNA(Gln) amidotransferase subunit C (Rhizobium meliloti (strain 1021) (Ensifer meliloti)).